The sequence spans 91 residues: UPF0512 protein F (91 aa).

Belongs to the UPF0512 family.

This is UPF0512 protein F from Dictyostelium discoideum (Social amoeba).